Consider the following 490-residue polypeptide: Betaine aldehyde dehydrogenase (490 aa).

Residues I27 and D93 each coordinate K(+). 150–152 provides a ligand contact to NAD(+); the sequence is GAW. Residue K162 is the Charge relay system of the active site. 176–179 contacts NAD(+); the sequence is KPSE. Residue V180 coordinates K(+). Position 230–233 (230–233) interacts with NAD(+); that stretch reads GTDT. K(+) is bound at residue L246. E252 (proton acceptor) is an active-site residue. Positions 254, 286, and 387 each coordinate NAD(+). C286 acts as the Nucleophile in catalysis. C286 is subject to Cysteine sulfenic acid (-SOH). 2 residues coordinate K(+): K457 and G460. E464 (charge relay system) is an active-site residue.

The protein belongs to the aldehyde dehydrogenase family. In terms of assembly, dimer of dimers. Requires K(+) as cofactor.

It carries out the reaction betaine aldehyde + NAD(+) + H2O = glycine betaine + NADH + 2 H(+). It participates in amine and polyamine biosynthesis; betaine biosynthesis via choline pathway; betaine from betaine aldehyde: step 1/1. Functionally, involved in the biosynthesis of the osmoprotectant glycine betaine. Catalyzes the irreversible oxidation of betaine aldehyde to the corresponding acid. This Pseudomonas syringae pv. syringae (strain B728a) protein is Betaine aldehyde dehydrogenase.